The primary structure comprises 838 residues: Gamma-tubulin complex component 3 (838 aa).

Residues 1–199 (MEDDDQQKAA…VRDVLYASQG (199 aa)) are mediates interactions with GIP1 and GIP2. The tract at residues 200 to 256 (IDGKYVKFNSEIDGYAVQESVKVPRATRIMVRMLSELGWLFRKVKTFITESMDRFPA) is triggers nucleus envelope localization.

It belongs to the TUBGCP family. Part of the gamma-tubulin complex. Gamma-tubulin complex is composed of gamma-tubulin and GCP proteins. Interacts directly with GCP2, GIP1 and GIP2.

Its subcellular location is the cytoplasm. It is found in the cytoskeleton. It localises to the microtubule organizing center. The protein localises to the nucleus envelope. The protein resides in the cell cortex. Its subcellular location is the spindle. Its function is as follows. Gamma-tubulin complex is necessary for microtubule nucleation at the microtubule organizing centers (MTOCs). Required for the positioning of the gamma-tubulin-containing complex on pre-existing microtubules and for the proper organization of cortical arrays. Functionally, gamma-tubulin complex is essential for the control of microtubular network remodeling in the course of initiation and development of giant-feeding cells, and for the successful reproduction of nematodes (e.g. Meloidogyne spp.) in their plant hosts. The polypeptide is Gamma-tubulin complex component 3 (GCP3) (Arabidopsis thaliana (Mouse-ear cress)).